We begin with the raw amino-acid sequence, 200 residues long: Holliday junction branch migration complex subunit RuvA (200 aa).

The segment at 1-63 is domain I; sequence MYAYIKGTLS…EDAQLLYGFI (63 aa). A domain II region spans residues 64-142; it reads NEEEKEMFLS…ITEENSDDLL (79 aa). Residues 143–149 are flexible linker; the sequence is QTQVNGN. A domain III region spans residues 150–200; sequence EQNQIISEALLALQALGYSKRELTKVEKSLNKHNVNSVDEAVKIGLQTLVS.

It belongs to the RuvA family. As to quaternary structure, homotetramer. Forms an RuvA(8)-RuvB(12)-Holliday junction (HJ) complex. HJ DNA is sandwiched between 2 RuvA tetramers; dsDNA enters through RuvA and exits via RuvB. An RuvB hexamer assembles on each DNA strand where it exits the tetramer. Each RuvB hexamer is contacted by two RuvA subunits (via domain III) on 2 adjacent RuvB subunits; this complex drives branch migration. In the full resolvosome a probable DNA-RuvA(4)-RuvB(12)-RuvC(2) complex forms which resolves the HJ.

The protein localises to the cytoplasm. In terms of biological role, the RuvA-RuvB-RuvC complex processes Holliday junction (HJ) DNA during genetic recombination and DNA repair, while the RuvA-RuvB complex plays an important role in the rescue of blocked DNA replication forks via replication fork reversal (RFR). RuvA specifically binds to HJ cruciform DNA, conferring on it an open structure. The RuvB hexamer acts as an ATP-dependent pump, pulling dsDNA into and through the RuvAB complex. HJ branch migration allows RuvC to scan DNA until it finds its consensus sequence, where it cleaves and resolves the cruciform DNA. The protein is Holliday junction branch migration complex subunit RuvA of Staphylococcus epidermidis (strain ATCC 35984 / DSM 28319 / BCRC 17069 / CCUG 31568 / BM 3577 / RP62A).